A 293-amino-acid polypeptide reads, in one-letter code: tRNA pseudouridine synthase B (293 aa).

The active-site Nucleophile is the aspartate 39.

This sequence belongs to the pseudouridine synthase TruB family. Type 1 subfamily.

The enzyme catalyses uridine(55) in tRNA = pseudouridine(55) in tRNA. In terms of biological role, responsible for synthesis of pseudouridine from uracil-55 in the psi GC loop of transfer RNAs. This chain is tRNA pseudouridine synthase B, found in Streptococcus thermophilus (strain CNRZ 1066).